Reading from the N-terminus, the 251-residue chain is uncharacterized protein (251 aa).

Residue 12-36 (VVTGASSGIGEATARTLAAQGFHVV) participates in NADP(+) binding. Residue Ser136 coordinates substrate. Catalysis depends on Tyr149, which acts as the Proton acceptor.

This sequence belongs to the short-chain dehydrogenases/reductases (SDR) family.

This is an uncharacterized protein from Mycobacterium tuberculosis (strain CDC 1551 / Oshkosh).